Here is a 321-residue protein sequence, read N- to C-terminus: F-box protein At4g35930 (321 aa).

Over residues 1–13 (MGKVSPKDLDSKT) the composition is skewed to basic and acidic residues. Residues 1 to 23 (MGKVSPKDLDSKTSVRKKKLKSS) form a disordered region. In terms of domain architecture, F-box spans 159–207 (ESQLESLPMDLLVKIVCHLHHDQLKAVFHVSQRIRMATILARQYHFNYT). A disordered region spans residues 228 to 258 (WPFRRGDGNPTMVSSPHTPKAPKHAPRPPSR).

The sequence is that of F-box protein At4g35930 from Arabidopsis thaliana (Mouse-ear cress).